Reading from the N-terminus, the 435-residue chain is Elongation factor 1-alpha (435 aa).

In terms of domain architecture, tr-type G spans 6–231 (KVHINLVVIG…DALEPPKRPV (226 aa)). The segment at 15–22 (GHVDSGKS) is G1. 15-22 (GHVDSGKS) provides a ligand contact to GTP. Residues 71-75 (GITID) form a G2 region. The interval 92 to 95 (DAPG) is G3. GTP-binding positions include 92 to 96 (DAPGH) and 154 to 157 (NKMD). Positions 154–157 (NKMD) are G4. Residues 195 to 197 (SGF) form a G5 region.

It belongs to the TRAFAC class translation factor GTPase superfamily. Classic translation factor GTPase family. EF-Tu/EF-1A subfamily.

Its subcellular location is the cytoplasm. Its function is as follows. This protein promotes the GTP-dependent binding of aminoacyl-tRNA to the A-site of ribosomes during protein biosynthesis. This chain is Elongation factor 1-alpha, found in Tetrahymena pyriformis.